The sequence spans 86 residues: Small ribosomal subunit protein uS17 (86 aa).

The protein belongs to the universal ribosomal protein uS17 family. Part of the 30S ribosomal subunit.

Functionally, one of the primary rRNA binding proteins, it binds specifically to the 5'-end of 16S ribosomal RNA. The sequence is that of Small ribosomal subunit protein uS17 from Streptococcus pyogenes serotype M6 (strain ATCC BAA-946 / MGAS10394).